The following is an 801-amino-acid chain: tRNA(Met) cytidine acetyltransferase TmcA (801 aa).

Residues glutamine 228, 256 to 265, and arginine 412 contribute to the ATP site; that span reads GRGKSSAVGL. The N-acetyltransferase domain occupies 457-637; the sequence is EELFLKNEEE…YTVIVVKPLS (181 aa). Residues 562–564, 569–575, and glutamate 602 each bind acetyl-CoA; these read IAT and MGKGLGS.

It belongs to the RNA cytidine acetyltransferase family. TmcA subfamily.

It localises to the cytoplasm. The catalysed reaction is cytidine(34) in elongator tRNA(Met) + acetyl-CoA + ATP + H2O = N(4)-acetylcytidine(34) in elongator tRNA(Met) + ADP + phosphate + CoA + H(+). Its function is as follows. Catalyzes the formation of N(4)-acetylcytidine (ac(4)C) at the wobble position of tRNA(Met), by using acetyl-CoA as an acetyl donor and ATP (or GTP). The protein is tRNA(Met) cytidine acetyltransferase TmcA of Thermofilum pendens (strain DSM 2475 / Hrk 5).